The following is a 261-amino-acid chain: Small ribosomal subunit protein eS1 (261 aa).

Basic residues predominate over residues 1–18; the sequence is MAVGKNKRISKGKKGGKK. A disordered region spans residues 1–21; the sequence is MAVGKNKRISKGKKGGKKKAT.

The protein belongs to the eukaryotic ribosomal protein eS1 family. In terms of assembly, component of the small ribosomal subunit. Mature ribosomes consist of a small (40S) and a large (60S) subunit. The 40S subunit contains about 33 different proteins and 1 molecule of RNA (18S). The 60S subunit contains about 49 different proteins and 3 molecules of RNA (25S, 5.8S and 5S).

It is found in the cytoplasm. This is Small ribosomal subunit protein eS1 (cyc07) from Daucus carota (Wild carrot).